The primary structure comprises 227 residues: Ubiquitin domain-containing protein 1 (227 aa).

Residues 1 to 35 (MGNCVGRQRRERPAAPGHPRKRAGRNEPLKKERLK) are disordered. Residues 24–35 (GRNEPLKKERLK) show a composition bias toward basic and acidic residues. The Ubiquitin-like domain occupies 149-224 (FPLKVRLSTG…IQVIINQPPP (76 aa)).

Interacts with UBTD1.

Its function is as follows. May be involved in the regulation of cellular senescence through a positive feedback loop with TP53. Is a TP53 downstream target gene that increases the stability of TP53 protein by promoting the ubiquitination and degradation of MDM2. The chain is Ubiquitin domain-containing protein 1 (UBTD1) from Homo sapiens (Human).